We begin with the raw amino-acid sequence, 270 residues long: Putative serine acetyltransferase (270 aa).

It belongs to the transferase hexapeptide repeat family.

It localises to the cytoplasm. The protein localises to the nucleus. The catalysed reaction is L-serine + acetyl-CoA = O-acetyl-L-serine + CoA. It functions in the pathway amino-acid biosynthesis; L-cysteine biosynthesis; L-cysteine from L-serine: step 1/2. The protein is Putative serine acetyltransferase of Schizosaccharomyces pombe (strain 972 / ATCC 24843) (Fission yeast).